We begin with the raw amino-acid sequence, 336 residues long: Dihydroorotate dehydrogenase (quinone) (336 aa).

FMN-binding positions include 62-66 (AGLDK) and threonine 86. Substrate is bound at residue lysine 66. Residue 111 to 115 (NRMGF) participates in substrate binding. FMN is bound by residues asparagine 139 and asparagine 172. A substrate-binding site is contributed by asparagine 172. Catalysis depends on serine 175, which acts as the Nucleophile. Position 177 (asparagine 177) interacts with substrate. Residues lysine 217 and threonine 245 each contribute to the FMN site. Substrate is bound at residue 246 to 247 (NT). FMN is bound by residues glycine 268, glycine 297, and 318-319 (YS).

The protein belongs to the dihydroorotate dehydrogenase family. Type 2 subfamily. Monomer. Requires FMN as cofactor.

It localises to the cell membrane. The enzyme catalyses (S)-dihydroorotate + a quinone = orotate + a quinol. It functions in the pathway pyrimidine metabolism; UMP biosynthesis via de novo pathway; orotate from (S)-dihydroorotate (quinone route): step 1/1. In terms of biological role, catalyzes the conversion of dihydroorotate to orotate with quinone as electron acceptor. This chain is Dihydroorotate dehydrogenase (quinone), found in Enterobacter sp. (strain 638).